The primary structure comprises 120 residues: Large ribosomal subunit protein uL22 (120 aa).

The protein belongs to the universal ribosomal protein uL22 family. Part of the 50S ribosomal subunit.

Functionally, this protein binds specifically to 23S rRNA; its binding is stimulated by other ribosomal proteins, e.g. L4, L17, and L20. It is important during the early stages of 50S assembly. It makes multiple contacts with different domains of the 23S rRNA in the assembled 50S subunit and ribosome. The globular domain of the protein is located near the polypeptide exit tunnel on the outside of the subunit, while an extended beta-hairpin is found that lines the wall of the exit tunnel in the center of the 70S ribosome. The chain is Large ribosomal subunit protein uL22 from Corynebacterium aurimucosum (strain ATCC 700975 / DSM 44827 / CIP 107346 / CN-1) (Corynebacterium nigricans).